The chain runs to 1099 residues: Transmembrane protein 132D (1099 aa).

Positions 1-30 (MCPSEMGTLWHHWSPVLISLAALFSKVTEG) are cleaved as a signal peptide. Topologically, residues 31–915 (RGILESIQRF…LMQASKGLSD (885 aa)) are extracellular. N505 carries an N-linked (GlcNAc...) asparagine glycan. The tract at residues 797–858 (FGQNDANPNT…LMEGRGTTTD (62 aa)) is disordered. The segment covering 835 to 848 (GSQEGQYYGSSSMG) has biased composition (low complexity). The helical transmembrane segment at 916-936 (LEIGMYALLGVFCLAILVFLI) threads the bilayer. The Cytoplasmic portion of the chain corresponds to 937–1099 (NCVTFALKYR…NYMERLHENV (163 aa)).

This sequence belongs to the TMEM132 family. As to quaternary structure, interacts (via C-terminus) with NCKAP. As to expression, expressed in mature oligodendrocytes. Detected in the brain, lung, pancreas and testis. Highly expressed in mature neurons of the adult nervous system.

Its subcellular location is the membrane. Regulate neuronals morphology via inhibition of the WAVE regulatory complex (WCR), a complex that controls F-actin cytoskeletal dynamics. The protein is Transmembrane protein 132D of Homo sapiens (Human).